Here is a 249-residue protein sequence, read N- to C-terminus: MNVLSCSINTLIKEGLYEISGVEVGQHFYWQIGGFQVHAQVLITSWVVIAILLGSAVLVVRNPQTIPTDGQNFFEFVLEFIRDVSKTQIGEEYGPWVPFIGTLFLFIFVSNWSGALLPWKIIQLPQGELAAPTNDINTTVALALLTSVAYFYAGLSKKGLGYFSKYIQPTPILLPINILEDFTKPLSLSFRLFGNILADELVVVVLVSLVPLVVPIPVMFLGLFTSGIQALIFATLAAAYIGESMEGHH.

5 helical membrane-spanning segments follow: residues 40–60 (QVLI…VLVV), 97–117 (VPFI…GALL), 136–156 (INTT…AGLS), 201–221 (LVVV…VMFL), and 222–242 (GLFT…AYIG).

This sequence belongs to the ATPase A chain family. In terms of assembly, F-type ATPases have 2 components, CF(1) - the catalytic core - and CF(0) - the membrane proton channel. CF(1) has five subunits: alpha(3), beta(3), gamma(1), delta(1), epsilon(1). CF(0) has four main subunits: a, b, b' and c.

The protein resides in the plastid. The protein localises to the chloroplast thylakoid membrane. Functionally, key component of the proton channel; it plays a direct role in the translocation of protons across the membrane. This is ATP synthase subunit a, chloroplastic from Aethionema grandiflorum (Persian stone-cress).